The primary structure comprises 900 residues: Protein translocase subunit SecA (900 aa).

Residues Q87, 105–109, and D510 each bind ATP; that span reads GEGKT. The disordered stretch occupies residues 857–890; it reads DSLDSLSDGGSDSADGQEYPKVGRNEPCPCGSGK. Over residues 860–872 the composition is skewed to low complexity; it reads DSLSDGGSDSADG. Zn(2+) is bound by residues C884, C886, C895, and H896.

The protein belongs to the SecA family. As to quaternary structure, monomer and homodimer. Part of the essential Sec protein translocation apparatus which comprises SecA, SecYEG and auxiliary proteins SecDF-YajC and YidC. Zn(2+) is required as a cofactor.

Its subcellular location is the cell inner membrane. The protein localises to the cytoplasm. It catalyses the reaction ATP + H2O + cellular proteinSide 1 = ADP + phosphate + cellular proteinSide 2.. Part of the Sec protein translocase complex. Interacts with the SecYEG preprotein conducting channel. Has a central role in coupling the hydrolysis of ATP to the transfer of proteins into and across the cell membrane, serving both as a receptor for the preprotein-SecB complex and as an ATP-driven molecular motor driving the stepwise translocation of polypeptide chains across the membrane. This Marinomonas sp. (strain MWYL1) protein is Protein translocase subunit SecA.